We begin with the raw amino-acid sequence, 116 residues long: Large ribosomal subunit protein bL17 (116 aa).

It belongs to the bacterial ribosomal protein bL17 family. In terms of assembly, part of the 50S ribosomal subunit. Contacts protein L32.

The chain is Large ribosomal subunit protein bL17 from Helicobacter hepaticus (strain ATCC 51449 / 3B1).